Reading from the N-terminus, the 307-residue chain is Homoserine O-acetyltransferase (307 aa).

C142 (acyl-thioester intermediate) is an active-site residue. 2 residues coordinate substrate: K163 and S192. The active-site Proton acceptor is H235. E237 is an active-site residue. Substrate is bound at residue R249.

This sequence belongs to the MetA family.

Its subcellular location is the cytoplasm. It catalyses the reaction L-homoserine + acetyl-CoA = O-acetyl-L-homoserine + CoA. Its pathway is amino-acid biosynthesis; L-methionine biosynthesis via de novo pathway; O-acetyl-L-homoserine from L-homoserine: step 1/1. In terms of biological role, transfers an acetyl group from acetyl-CoA to L-homoserine, forming acetyl-L-homoserine. This chain is Homoserine O-acetyltransferase, found in Desulfitobacterium hafniense (strain Y51).